The sequence spans 311 residues: Putative prophage capsid protein YqbE (311 aa).

This sequence belongs to the encapsulin family. Family 3 subfamily.

Functionally, possibly a prophage capsid protein. This is Putative prophage capsid protein YqbE (yqbE) from Bacillus subtilis (strain 168).